The primary structure comprises 61 residues: Large ribosomal subunit protein uL30 (61 aa).

The protein belongs to the universal ribosomal protein uL30 family. Part of the 50S ribosomal subunit.

This chain is Large ribosomal subunit protein uL30, found in Laribacter hongkongensis (strain HLHK9).